The primary structure comprises 737 residues: LIMR family protein R05D3.2 (737 aa).

Residues 280-293 show a composition bias toward acidic residues; the sequence is ADIEEENSEQSEDV. A disordered region spans residues 280–416; sequence ADIEEENSEQ…PKKPKNPNFD (137 aa). Residues 303–318 show a composition bias toward basic and acidic residues; that stretch reads ETIHQVDRSDTPHLED.

The protein belongs to the LIMR family.

This chain is LIMR family protein R05D3.2, found in Caenorhabditis elegans.